The sequence spans 402 residues: Nicotinate phosphoribosyltransferase (402 aa).

Position 224 is a phosphohistidine; by autocatalysis (His-224).

Belongs to the NAPRTase family. In terms of processing, transiently phosphorylated on a His residue during the reaction cycle. Phosphorylation strongly increases the affinity for substrates and increases the rate of nicotinate D-ribonucleotide production. Dephosphorylation regenerates the low-affinity form of the enzyme, leading to product release.

The enzyme catalyses nicotinate + 5-phospho-alpha-D-ribose 1-diphosphate + ATP + H2O = nicotinate beta-D-ribonucleotide + ADP + phosphate + diphosphate. The protein operates within cofactor biosynthesis; NAD(+) biosynthesis; nicotinate D-ribonucleotide from nicotinate: step 1/1. In terms of biological role, catalyzes the synthesis of beta-nicotinate D-ribonucleotide from nicotinate and 5-phospho-D-ribose 1-phosphate at the expense of ATP. The chain is Nicotinate phosphoribosyltransferase from Neisseria meningitidis serogroup B (strain ATCC BAA-335 / MC58).